The following is a 174-amino-acid chain: Adipose-secreted signaling protein (174 aa).

Residue A2 is modified to N-acetylalanine. T147 is modified (phosphothreonine).

It belongs to the ADISSP family.

The protein resides in the secreted. Its function is as follows. Adipocyte-secreted protein (adipokine) that acts as a key regulator for white adipose tissue (WAT) thermogenesis and glucose homeostasis at least in part through activation of protein kinase A (PKA). This chain is Adipose-secreted signaling protein, found in Rattus norvegicus (Rat).